We begin with the raw amino-acid sequence, 258 residues long: MLVLVSPAKTLDFENPPLTTEHTRPTLLDQSQALIKECQKLTPVQIASLMKVSDKIAGLNAARFAQWQPNFTLGEAKQAIFAFRGDVYTGFDADSLSAAQLQSAQNHLRILSGLYGLLKPLDLILPYRLEMGTRLENAKGSNLYAFWGEIITDEVNRALIEQGDDIIVNLASNEYFKAVKEKSLKGRLVTPVFKDCKNGQYKVISFYAKKARGLMARFIIEQQPKDLTALISFDLDGYYYSEAQSTPSSPVFLRDEQV.

This sequence belongs to the UPF0246 family.

This Shewanella denitrificans (strain OS217 / ATCC BAA-1090 / DSM 15013) protein is UPF0246 protein Sden_2729.